Reading from the N-terminus, the 759-residue chain is Fidgetin (759 aa).

Disordered regions lie at residues 89–111, 200–237, 258–293, and 337–429; these read SNYSDTPSGLVNGRKNDSEPWQP, SQATPALPSPHPSPLHSSGLLQPPPPPPPPPALVPGYN, VGSGYSPGGAPPPPSAYLPSGIPAPTPLPPTTVPGY, and SYGQ…VMSE. Composition is skewed to pro residues over residues 221-232 and 266-289; these read QPPPPPPPPPAL and GAPPPPSAYLPSGIPAPTPLPPTT. Polar residues-rich tracts occupy residues 337 to 347 and 382 to 418; these read SYGQQRSTQSP and LMPSEQQRKFSSQSSRALTPPSYSTAKNSLGSRSSES. The residue at position 400 (T400) is a Phosphothreonine. Residues A489 and 529 to 534 contribute to the ATP site; that span reads GTGKTL.

This sequence belongs to the AAA ATPase family. In terms of assembly, interacts with AKAP8 (via C-terminus). In terms of tissue distribution, widely expressed.

The protein localises to the nucleus matrix. It is found in the cytoplasm. Its subcellular location is the cytoskeleton. It localises to the microtubule organizing center. The protein resides in the centrosome. Functionally, ATP-dependent microtubule severing protein. Severs microtubules along their length and depolymerizes their ends, primarily the minus-end, suppressing microtubule growth from and attachment to centrosomes. Microtubule severing may promote rapid reorganization of cellular microtubule arrays and the release of microtubules from the centrosome following nucleation. Microtubule release from the mitotic spindle poles may allow depolymerization of the microtubule end proximal to the spindle pole, leading to poleward microtubule flux and poleward motion of chromosome. This Mus musculus (Mouse) protein is Fidgetin (Fign).